Consider the following 130-residue polypeptide: Large ribosomal subunit protein bL20 (130 aa).

Belongs to the bacterial ribosomal protein bL20 family.

Binds directly to 23S ribosomal RNA and is necessary for the in vitro assembly process of the 50S ribosomal subunit. It is not involved in the protein synthesizing functions of that subunit. This is Large ribosomal subunit protein bL20 from Solibacter usitatus (strain Ellin6076).